The sequence spans 615 residues: MERGERVSVPVSGYSRGEGVTVANELKKVDAVVVGFGWAGAIMAKELTEAGLNVVALERGPHRDTYPDGAYPQSIDELTYNIRKKLFQDLSKSTVTIRHDASQTAVPYRQLAAFLPGTGTGGAGLHWSGVHFRVDPVELNLRSHYEARYGKNFIPEGMTIQDFGVSYNELEPFFDQAEKVFGTSGSAWTIKGKMIGKEKGGNFYAPDRSSDFPLPAQKRTYSAQLFAQAAESVGYHPYDMPSANTSGPYTNTYGAQMGPCNFCGYCSGYACYMYSKASPNVNILPALRQEPKFELRNNAYVLRVNLTGDKKRATGVTYLDGQGREVVQPADLVILSAFQFHNVHLMLLSGIGQPYNPITNEGVVGRNFAYQNISTLKALFDKNTTTNPFIGAGGAGVAVDDFNADNFDHGPYGFVGGSPFWVNQAGTKPVSGLPTPKGTPNWGSQWKAAVADTYNHHISMDAHGAHQSYRANYLDLDPNYKNVYGQPLLRMTFDWQDNDIRMAQFMVGKMRKITEAMNPKMIIGGAKGPGTHFDTTVYQTTHMSGGAIMGEDPKTSAVNRYLQSWDVPNVFVPGASAFPQGLGYNPTGMVAALTYWSAKAIREQYLKNPGPLVQA.

Residues 1 to 22 form the signal peptide; the sequence is MERGERVSVPVSGYSRGEGVTV. His-542 acts as the Proton acceptor in catalysis.

Belongs to the GMC oxidoreductase family. In terms of assembly, heterotrimer. FAD is required as a cofactor.

It localises to the cell membrane. The enzyme catalyses D-gluconate + A = 2-dehydro-D-gluconate + AH2. Its function is as follows. Part of the heterotrimer that catalyzes the conversion of D-gluconate to 2-dehydro-D-gluconate. This subunit functions as the dehydrogenase. This chain is Gluconate 2-dehydrogenase flavoprotein, found in Pantoea cypripedii (Pectobacterium cypripedii).